The primary structure comprises 843 residues: Tetratricopeptide repeat protein 7B (843 aa).

One copy of the TPR 1 repeat lies at 97 to 131 (QESNLIMAKLNYVEGDYKEALNIYARVGLDDLPLT). Phosphoserine is present on residues S160 and S202. TPR repeat units follow at residues 219-252 (ETGLQRAHVLYFKNGNLTRGVGRFRELLRAVETR), 363-396 (SVVYDLLTIALGRRGQYEMLSECLERAMKFAFEE), 397-430 (FHLWYQFALSLMAAGKSARAVKVLKECIRLKPDD), 479-514 (TYSLQATDASLRGMQEVLQRKALLAFQRAHSLSPTD), 516-548 (QAAFYLALQLAISRQIPEALGYVRQALQLQGDD), and 549-582 (ANSLHLLALLLSAQKHYHDALNIIDMALSEYPEN). Phosphoserine is present on residues S625, S629, S630, S673, S677, S678, and S681. TPR repeat units follow at residues 696–729 (AQIWLHAAEVYIGIGKPAEATACTQEAANLFPMS), 730–763 (HNVLYMRGQIAELRGSMDEARRWYEEALAISPTH), 765–797 (KSMQRLALILHQLGRYSLAEKILRDAVQVNSTA), and 798–831 (HEVWNGLGEVLQAQGNDAAATECFLTALELEASS).

Component of a phosphatidylinositol 4-kinase (PI4K) complex, composed of PI4KA, EFR3 (EFR3A or EFR3B), TTC7 (TTC7A or TTC7B) and HYCC (HYCC1 or HYCC2). Interacts with PI4KA, interaction is direct. Interacts with EFR3 (EFR3A or EFR3B), interaction is direct. Interacts with HYCC (HYCC1 or HYCC2), interaction is direct. Association with the PI4K complex is strongly reduced by TMEM150A.

The protein resides in the cytoplasm. It is found in the cytosol. The protein localises to the cell membrane. Functionally, component of a complex required to localize phosphatidylinositol 4-kinase (PI4K) to the plasma membrane. The complex acts as a regulator of phosphatidylinositol 4-phosphate (PtdIns(4)P) synthesis. In the complex, plays a central role in bridging PI4KA to EFR3B and HYCC1, via direct interactions. In Homo sapiens (Human), this protein is Tetratricopeptide repeat protein 7B (TTC7B).